The sequence spans 782 residues: E3 ubiquitin-protein ligase SopA (782 aa).

Residues 137–171 (VSVSANNRPTVSEGRTPPVSPSLSLQATSSPSSPA) are disordered. Over residues 157–171 (PSLSLQATSSPSSPA) the composition is skewed to low complexity. Residue Cys-753 is the Glycyl thioester intermediate of the active site.

The protein belongs to the SopA E3 ligase family. In terms of processing, ubiquitinated in the presence of host E1 ubiquitin-activating enzyme, E2 ubiquitin-conjugating enzyme and ubiquitin.

The protein localises to the secreted. Its subcellular location is the host cell. The catalysed reaction is S-ubiquitinyl-[E2 ubiquitin-conjugating enzyme]-L-cysteine + [acceptor protein]-L-lysine = [E2 ubiquitin-conjugating enzyme]-L-cysteine + N(6)-ubiquitinyl-[acceptor protein]-L-lysine.. Functionally, effector proteins function to alter host cell physiology and promote bacterial survival in host tissues. This protein is an E3 ubiquitin ligase that interferes with host's ubiquitination pathway. The polypeptide is E3 ubiquitin-protein ligase SopA (sopA) (Salmonella heidelberg (strain SL476)).